Consider the following 205-residue polypeptide: Tic20 family protein Ycf60 (205 aa).

5 helical membrane passes run 5–25 (LFVNILFGTACIIIFGLVILI), 54–74 (AISCLIYFLPLLEGIAQFGIV), 102–122 (LIGFCIFITLYLIFVRGIIQI), 130–150 (IVQALLLYLLDSVIGTVLTSL), and 163–183 (LADTLLLITFMISIYAGTDAL).

The protein belongs to the Tic20 family.

The protein resides in the plastid. It is found in the chloroplast membrane. In Cyanidium caldarium (Red alga), this protein is Tic20 family protein Ycf60 (ycf60).